We begin with the raw amino-acid sequence, 417 residues long: Serine hydroxymethyltransferase (417 aa).

Residues Leu121 and 125–127 contribute to the (6S)-5,6,7,8-tetrahydrofolate site; that span reads GHL. Lys229 carries the post-translational modification N6-(pyridoxal phosphate)lysine. 355-357 is a binding site for (6S)-5,6,7,8-tetrahydrofolate; sequence SPF.

Belongs to the SHMT family. In terms of assembly, homodimer. Pyridoxal 5'-phosphate serves as cofactor.

Its subcellular location is the cytoplasm. The catalysed reaction is (6R)-5,10-methylene-5,6,7,8-tetrahydrofolate + glycine + H2O = (6S)-5,6,7,8-tetrahydrofolate + L-serine. Its pathway is one-carbon metabolism; tetrahydrofolate interconversion. It functions in the pathway amino-acid biosynthesis; glycine biosynthesis; glycine from L-serine: step 1/1. In terms of biological role, catalyzes the reversible interconversion of serine and glycine with tetrahydrofolate (THF) serving as the one-carbon carrier. This reaction serves as the major source of one-carbon groups required for the biosynthesis of purines, thymidylate, methionine, and other important biomolecules. Also exhibits THF-independent aldolase activity toward beta-hydroxyamino acids, producing glycine and aldehydes, via a retro-aldol mechanism. This Shewanella putrefaciens (strain CN-32 / ATCC BAA-453) protein is Serine hydroxymethyltransferase.